The sequence spans 211 residues: Arginine exporter protein ArgO (211 aa).

Helical transmembrane passes span 1-21, 37-57, 68-88, 111-131, 147-167, and 179-199; these read MISY…PLGP, LMIA…GIFG, LLAL…FGAL, IIAT…DTFV, WFAL…ALLA, and AQRI…FQLA.

Belongs to the LysE/ArgO transporter (TC 2.A.75) family.

It localises to the cell inner membrane. The enzyme catalyses L-arginine(in) = L-arginine(out). Functionally, involved in the export of arginine. Important to control the intracellular level of arginine and the correct balance between arginine and lysine. The protein is Arginine exporter protein ArgO of Salmonella typhimurium (strain LT2 / SGSC1412 / ATCC 700720).